Reading from the N-terminus, the 470-residue chain is Macrophage metalloelastase (470 aa).

Positions 1–16 (MKFLLILLLQATASGA) are cleaved as a signal peptide. Positions 17-105 (LPLNSSTSLE…DVHHFREMPG (89 aa)) are cleaved as a propeptide — activation peptide. Asn20 carries an N-linked (GlcNAc...) asparagine glycan. Positions 90-97 (PRCGVPDV) match the Cysteine switch motif. A Zn(2+)-binding site is contributed by Cys92. Ca(2+)-binding residues include Asp124 and Asp158. Zn(2+)-binding residues include His168 and Asp170. Residues Asp175, Gly176, Gly178, and Ile180 each coordinate Ca(2+). Residue His183 coordinates Zn(2+). Ca(2+)-binding residues include Gly190, Gly192, and Asp194. His196 contacts Zn(2+). Residues Asp198, Glu199, and Glu201 each contribute to the Ca(2+) site. His218 provides a ligand contact to Zn(2+). The active site involves Glu219. Positions 222 and 228 each coordinate Zn(2+). 4 Hemopexin repeats span residues 279 to 328 (PALC…WPTL), 329 to 375 (PSGI…GFPN), 377 to 425 (VKKI…FQGI), and 426 to 470 (GPKI…WFGC). Residues Cys282 and Cys470 are joined by a disulfide bond. Asn285 carries N-linked (GlcNAc...) asparagine glycosylation. Residues Asp289, Glu333, Asp381, and Asp430 each coordinate Ca(2+).

This sequence belongs to the peptidase M10A family. Ca(2+) is required as a cofactor. The cofactor is Zn(2+). Found in alveolar macrophages but not in peripheral blood monocytes.

It localises to the secreted. It is found in the extracellular space. Its subcellular location is the extracellular matrix. It catalyses the reaction Hydrolysis of soluble and insoluble elastin. Specific cleavages are also produced at 14-Ala-|-Leu-15 and 16-Tyr-|-Leu-17 in the B chain of insulin.. In terms of biological role, may be involved in tissue injury and remodeling. Has significant elastolytic activity. Can accept large and small amino acids at the P1' site, but has a preference for leucine. Aromatic or hydrophobic residues are preferred at the P1 site, with small hydrophobic residues (preferably alanine) occupying P3. The protein is Macrophage metalloelastase (MMP12) of Homo sapiens (Human).